The primary structure comprises 280 residues: Thymidylate synthase (280 aa).

Residue R21 participates in dUMP binding. H51 contacts (6R)-5,10-methylene-5,6,7,8-tetrahydrofolate. 142–143 (RR) serves as a coordination point for dUMP. Catalysis depends on C162, which acts as the Nucleophile. DUMP contacts are provided by residues 182–185 (RSAD), N193, and 223–225 (HLY). D185 contributes to the (6R)-5,10-methylene-5,6,7,8-tetrahydrofolate binding site. A279 provides a ligand contact to (6R)-5,10-methylene-5,6,7,8-tetrahydrofolate.

The protein belongs to the thymidylate synthase family. Bacterial-type ThyA subfamily. As to quaternary structure, homodimer.

It is found in the cytoplasm. The enzyme catalyses dUMP + (6R)-5,10-methylene-5,6,7,8-tetrahydrofolate = 7,8-dihydrofolate + dTMP. Its pathway is pyrimidine metabolism; dTTP biosynthesis. Its function is as follows. Catalyzes the reductive methylation of 2'-deoxyuridine-5'-monophosphate (dUMP) to 2'-deoxythymidine-5'-monophosphate (dTMP) while utilizing 5,10-methylenetetrahydrofolate (mTHF) as the methyl donor and reductant in the reaction, yielding dihydrofolate (DHF) as a by-product. This enzymatic reaction provides an intracellular de novo source of dTMP, an essential precursor for DNA biosynthesis. This Acinetobacter baumannii (strain AB307-0294) protein is Thymidylate synthase.